The sequence spans 316 residues: Aspartate carbamoyltransferase catalytic subunit (316 aa).

The carbamoyl phosphate site is built by Arg-66 and Thr-67. Lys-94 provides a ligand contact to L-aspartate. Residues Arg-116, His-146, and Gln-149 each contribute to the carbamoyl phosphate site. L-aspartate contacts are provided by Arg-180 and Arg-235. 2 residues coordinate carbamoyl phosphate: Gly-276 and Pro-277.

Belongs to the aspartate/ornithine carbamoyltransferase superfamily. ATCase family. As to quaternary structure, heterododecamer (2C3:3R2) of six catalytic PyrB chains organized as two trimers (C3), and six regulatory PyrI chains organized as three dimers (R2).

It carries out the reaction carbamoyl phosphate + L-aspartate = N-carbamoyl-L-aspartate + phosphate + H(+). The protein operates within pyrimidine metabolism; UMP biosynthesis via de novo pathway; (S)-dihydroorotate from bicarbonate: step 2/3. Catalyzes the condensation of carbamoyl phosphate and aspartate to form carbamoyl aspartate and inorganic phosphate, the committed step in the de novo pyrimidine nucleotide biosynthesis pathway. This chain is Aspartate carbamoyltransferase catalytic subunit, found in Stenotrophomonas maltophilia (strain K279a).